A 267-amino-acid chain; its full sequence is 2-keto-3-deoxy-L-rhamnonate aldolase (267 aa).

The Proton acceptor role is filled by H49. Q151 lines the substrate pocket. E153 contacts Mg(2+). Positions 178 and 179 each coordinate substrate. Mg(2+) is bound at residue D179.

Belongs to the HpcH/HpaI aldolase family. KDR aldolase subfamily. As to quaternary structure, homohexamer. Mg(2+) serves as cofactor.

The catalysed reaction is 2-dehydro-3-deoxy-L-rhamnonate = (S)-lactaldehyde + pyruvate. In terms of biological role, catalyzes the reversible retro-aldol cleavage of 2-keto-3-deoxy-L-rhamnonate (KDR) to pyruvate and lactaldehyde. The protein is 2-keto-3-deoxy-L-rhamnonate aldolase of Salmonella gallinarum (strain 287/91 / NCTC 13346).